Here is a 354-residue protein sequence, read N- to C-terminus: Methylthioribose-1-phosphate isomerase (354 aa).

Substrate contacts are provided by residues 58–60 (RGA), Arg-101, and Gln-204. Asp-245 serves as the catalytic Proton donor. Residue 255–256 (NK) coordinates substrate.

The protein belongs to the eIF-2B alpha/beta/delta subunits family. MtnA subfamily.

The catalysed reaction is 5-(methylsulfanyl)-alpha-D-ribose 1-phosphate = 5-(methylsulfanyl)-D-ribulose 1-phosphate. It participates in amino-acid biosynthesis; L-methionine biosynthesis via salvage pathway; L-methionine from S-methyl-5-thio-alpha-D-ribose 1-phosphate: step 1/6. Functionally, catalyzes the interconversion of methylthioribose-1-phosphate (MTR-1-P) into methylthioribulose-1-phosphate (MTRu-1-P). The chain is Methylthioribose-1-phosphate isomerase from Xylella fastidiosa (strain 9a5c).